Reading from the N-terminus, the 31-residue chain is Cytochrome b6-f complex subunit 6 (31 aa).

A helical membrane pass occupies residues Ile-4 to Gly-24.

It belongs to the PetL family. The 4 large subunits of the cytochrome b6-f complex are cytochrome b6, subunit IV (17 kDa polypeptide, PetD), cytochrome f and the Rieske protein, while the 4 small subunits are PetG, PetL, PetM and PetN. The complex functions as a dimer.

The protein localises to the plastid. The protein resides in the chloroplast thylakoid membrane. Its function is as follows. Component of the cytochrome b6-f complex, which mediates electron transfer between photosystem II (PSII) and photosystem I (PSI), cyclic electron flow around PSI, and state transitions. PetL is important for photoautotrophic growth as well as for electron transfer efficiency and stability of the cytochrome b6-f complex. This chain is Cytochrome b6-f complex subunit 6, found in Hamamelis virginiana (Witch-hazel).